Consider the following 487-residue polypeptide: N-succinylglutamate 5-semialdehyde dehydrogenase (487 aa).

221 to 226 provides a ligand contact to NAD(+); the sequence is GSSDTG. Residues Glu-244 and Cys-278 contribute to the active site.

Belongs to the aldehyde dehydrogenase family. AstD subfamily.

It carries out the reaction N-succinyl-L-glutamate 5-semialdehyde + NAD(+) + H2O = N-succinyl-L-glutamate + NADH + 2 H(+). It functions in the pathway amino-acid degradation; L-arginine degradation via AST pathway; L-glutamate and succinate from L-arginine: step 4/5. Its function is as follows. Catalyzes the NAD-dependent reduction of succinylglutamate semialdehyde into succinylglutamate. The protein is N-succinylglutamate 5-semialdehyde dehydrogenase of Burkholderia mallei (strain ATCC 23344).